Consider the following 191-residue polypeptide: dCTP deaminase, dUMP-forming (191 aa).

Residues 101 to 106 (KSSLGR), aspartate 119, 127 to 129 (TLE), glutamine 148, tyrosine 162, and glutamine 174 each bind dCTP. Catalysis depends on glutamate 129, which acts as the Proton donor/acceptor. Positions 169-191 (SRYQGQRGPTASRSFQNFHRTQV) are disordered. The span at 171-191 (YQGQRGPTASRSFQNFHRTQV) shows a compositional bias: polar residues.

This sequence belongs to the dCTP deaminase family. Homotrimer.

It carries out the reaction dCTP + 2 H2O = dUMP + NH4(+) + diphosphate. It functions in the pathway pyrimidine metabolism; dUMP biosynthesis; dUMP from dCTP: step 1/1. In terms of biological role, bifunctional enzyme that catalyzes both the deamination of dCTP to dUTP and the hydrolysis of dUTP to dUMP without releasing the toxic dUTP intermediate. This Streptomyces griseus subsp. griseus (strain JCM 4626 / CBS 651.72 / NBRC 13350 / KCC S-0626 / ISP 5235) protein is dCTP deaminase, dUMP-forming.